Consider the following 344-residue polypeptide: 5,10-methenyltetrahydromethanopterin hydrogenase (344 aa).

The protein belongs to the HMD family.

The catalysed reaction is 5,10-methenyl-5,6,7,8-tetrahydromethanopterin + H2 = 5,10-methylenetetrahydromethanopterin + H(+). Its pathway is one-carbon metabolism; methanogenesis from CO(2); 5,10-methylene-5,6,7,8-tetrahydromethanopterin from 5,10-methenyl-5,6,7,8-tetrahydromethanopterin (hydrogen route): step 1/1. Functionally, catalyzes the reversible reduction of methenyl-H(4)MPT(+) to methylene-H(4)MPT. The sequence is that of 5,10-methenyltetrahydromethanopterin hydrogenase (hmd) from Methanothermobacter thermautotrophicus (Methanobacterium thermoformicicum).